The sequence spans 214 residues: Transmembrane emp24 domain-containing protein p24delta9 (214 aa).

A signal peptide spans 1-24 (MFLRSLNLCTILLFLAISSQVSQS). At 25–181 (LHFELQSGRT…QNLNRATNSK (157 aa)) the chain is on the lumenal side. The region spanning 34 to 149 (TKCISEDIKS…VEVMEFDVKR (116 aa)) is the GOLD domain. Residues 164–177 (LREREEEMQNLNRA) adopt a coiled-coil conformation. Arg167 is modified (omega-N-methylated arginine). Residues 182 to 202 (MAWLSFLSLFVCLGVAGMQFV) traverse the membrane as a helical segment. Topologically, residues 203–214 (HLKTFFEKKKVI) are cytoplasmic. Residues 207 to 208 (FF) carry the COPII vesicle coat-binding motif. The COPI vesicle coat-binding motif lies at 207–214 (FFEKKKVI).

The protein belongs to the EMP24/GP25L family. As to quaternary structure, probably oligomerizes with other members of the EMP24/GP25L family. Associates with the COPI vesicle coat (coatomer). Associates with the COPII vesicle coat (coatomer).

The protein resides in the endoplasmic reticulum membrane. The protein localises to the golgi apparatus. Its subcellular location is the cis-Golgi network membrane. It localises to the golgi stack membrane. In terms of biological role, involved in vesicular protein trafficking. Mainly functions in the early secretory pathway. Thought to act as cargo receptor at the lumenal side for incorporation of secretory cargo molecules into transport vesicles and to be involved in vesicle coat formation at the cytoplasmic side. This Arabidopsis thaliana (Mouse-ear cress) protein is Transmembrane emp24 domain-containing protein p24delta9.